The primary structure comprises 120 residues: Large ribosomal subunit protein bL17 (120 aa).

This sequence belongs to the bacterial ribosomal protein bL17 family. In terms of assembly, part of the 50S ribosomal subunit. Contacts protein L32.

The sequence is that of Large ribosomal subunit protein bL17 from Desulforapulum autotrophicum (strain ATCC 43914 / DSM 3382 / VKM B-1955 / HRM2) (Desulfobacterium autotrophicum).